A 498-amino-acid chain; its full sequence is ADP,ATP carrier protein 1 (498 aa).

The Cytoplasmic portion of the chain corresponds to 1–33 (MSTSKSENYLSELRKIIWPIEQHENKKFLPLAF). Residues 34 to 54 (MMFCILLNYSTLRSIKDGFVV) form a helical membrane-spanning segment. C37 and C85 are disulfide-bonded. Over 55-67 (TDIGTESISFLKT) the chain is Extracellular. The helical transmembrane segment at 68–88 (YIVLPSAVIAMVIYVKLCDIL) threads the bilayer. Topologically, residues 89 to 92 (KQEN) are cytoplasmic. Residues 93-113 (IFYVITSFFLGYFALFAFVLY) traverse the membrane as a helical segment. Residues 114–147 (PYPDLVHPDHKTIESLSLAYPNFKWFIKIVGKWS) are Extracellular-facing. A helical membrane pass occupies residues 148–168 (FASFYTIAELWGTMMLSLLFW). Topologically, residues 169–184 (QFANQITKITEAKRFY) are cytoplasmic. A helical transmembrane segment spans residues 185 to 205 (SMFGLLANLALPVTSVVIGYF). Residues 206 to 218 (LHEKTQIVSEHLK) lie on the Extracellular side of the membrane. Residues 219–239 (FIPLFVIMITSSFLIILTYRW) traverse the membrane as a helical segment. At 240–279 (MNKNVLTDPRLYDPTLVKEKKAKAKLSFIESFKMIFTSKY) the chain is on the cytoplasmic side. Residues 280-300 (VGYIALLIIAYGVSVNLVEGV) form a helical membrane-spanning segment. At 301–320 (WKSKVKELYPTKEAYTIYMG) the chain is on the extracellular side. The helical transmembrane segment at 321–341 (QFQFYQGWVAIAFMLIGSNIL) threads the bilayer. The Cytoplasmic segment spans residues 342–348 (RKVSWLT). Residues 349-369 (AAMITPLMMFITGAAFFSFIF) form a helical membrane-spanning segment. At 370 to 379 (FDSVIAMNLT) the chain is on the extracellular side. The chain crosses the membrane as a helical span at residues 380-400 (GILASSPLTLAVMFGMIQNVL). The Cytoplasmic portion of the chain corresponds to 401-438 (SKGVKYSLFDATKNMAYIPLDKDLRVKGQAAVEVIGGR). 436 to 442 (GGRLGKS) contributes to the ATP binding site. A helical membrane pass occupies residues 439–459 (LGKSGGAIIQSTFFILFPAFG). Topologically, residues 460-465 (FIEATP) are extracellular. A helical membrane pass occupies residues 466–486 (YFASIFFIIVILWIFAVKGLN). The Cytoplasmic portion of the chain corresponds to 487–498 (KEYQVLVNKNEN).

It belongs to the ADP/ATP translocase tlc family.

It is found in the cell membrane. In terms of biological role, provides the rickettsial cell with host ATP in exchange for rickettsial ADP. This is an obligate exchange system. This energy acquiring activity is an important component of rickettsial parasitism. In Rickettsia typhi (strain ATCC VR-144 / Wilmington), this protein is ADP,ATP carrier protein 1 (tlcA).